The following is a 565-amino-acid chain: Perivitellin-2 67 kDa subunit (565 aa).

A signal peptide spans 1-26; sequence MSQLRWWVVSQVLLLIAICSLDHSEG. The region spanning 27–340 is the MACPF domain; sequence ARVCPKIVPG…AKVANLDRLT (314 aa). The segment at 387–565 is invertebrate MACPF Accessory Domain (IMAD); the sequence is VPAWFSDRTT…CGMSWALIAK (179 aa).

Perivitellin-2 is a dimer of heterodimers held together head-to-tail by non-covalent forces. The heterodimer is composed of the tachylectin subunit (31 kDa) and the MACPF subunit (67 kDa) that are disulfide-linked. PV2 is a very high density lipoprotein (VHDL). It contains 3.75% of lipids. The major lipid classes are free sterols and phospholipids and also have significant quantities of energy-providing triacylglycerides and free fatty acids. In terms of tissue distribution, produced by albumen secretory cells. Found in developing eggs.

It localises to the secreted. The protein localises to the target cell membrane. The egg defensive protein perivitellin-2 is a pore-forming two-subunit glycoprotein that affects both the nervous and digestive systems of mammals. In addition, it is a source of both structural and energetic molecules during embryonic development. The tachylectin subunit (31 kDa) binds target membranes while the MACPF subunit (67 kDa) disrupts lipid bilayers forming large pores (inner diameter of about 5.6 nm) altering the plasma membrance conductance. Both in vivo and in vitro, the protein shows wide pH range stability and is resistant to enzymatic proteolysis from gastrointestinal environments. It is cytotoxic to both epithelial and immune cells from the digestive system of mammals. It induces enterocyte death by a lytic mechanism and disrupts enterocyte monolayers in a dose-dependent manner. After oral administration to mice, it binds enterocytes and induces large dose-dependent morphological changes on their small intestine mucosa, reducing the absorptive surface. Additionally, it is detected in the Peyer's patches where it activates lymphoid follicles and triggers apoptosis. The toxin can also traverse the intestinal barrier and induce oral adaptive immunity with evidence of circulating antibody response. The toxin also shows hemagglutination properties thanks to the tachylectin subunit, but has no hemolytic activity. In addition to enterotoxin activity, the toxin also acts as a neurotoxin, since an intraperitoneal injection can induce paralysis of the mice rear limbs, followed by death. The chain is Perivitellin-2 67 kDa subunit from Pomacea maculata (Giant applesnail).